The primary structure comprises 244 residues: Flavin-dependent thymidylate synthase (244 aa).

The 223-residue stretch at 17–239 folds into the ThyX domain; sequence ITVELVKHSA…PETHAAFEKQ (223 aa). FAD contacts are provided by residues serine 68, 91 to 93, and glutamate 99; that span reads RHR. Residues 88 to 91, 99 to 103, and arginine 171 contribute to the dUMP site; these read EFMR and EESGR. The ThyX motif motif lies at 91–101; it reads RHRIASYNEES. Residues 187–189 and asparagine 193 contribute to the FAD site; that span reads NAR. DUMP is bound at residue arginine 198. Residue arginine 198 is the Involved in ionization of N3 of dUMP, leading to its activation of the active site.

Belongs to the thymidylate synthase ThyX family. As to quaternary structure, homotetramer. FAD is required as a cofactor.

The enzyme catalyses dUMP + (6R)-5,10-methylene-5,6,7,8-tetrahydrofolate + NADPH + H(+) = dTMP + (6S)-5,6,7,8-tetrahydrofolate + NADP(+). Its pathway is pyrimidine metabolism; dTTP biosynthesis. Functionally, catalyzes the reductive methylation of 2'-deoxyuridine-5'-monophosphate (dUMP) to 2'-deoxythymidine-5'-monophosphate (dTMP) while utilizing 5,10-methylenetetrahydrofolate (mTHF) as the methyl donor, and NADPH and FADH(2) as the reductant. This Tropheryma whipplei (strain Twist) (Whipple's bacillus) protein is Flavin-dependent thymidylate synthase.